Reading from the N-terminus, the 226-residue chain is PKHD-type hydroxylase Daci_1172 (226 aa).

The Fe2OG dioxygenase domain occupies 78-178 (KVLPPRFNRY…RYASFFWTHS (101 aa)). 3 residues coordinate Fe cation: His96, Asp98, and His159. Arg169 serves as a coordination point for 2-oxoglutarate.

It depends on Fe(2+) as a cofactor. L-ascorbate serves as cofactor.

In Delftia acidovorans (strain DSM 14801 / SPH-1), this protein is PKHD-type hydroxylase Daci_1172.